Reading from the N-terminus, the 380-residue chain is Queuine tRNA-ribosyltransferase (380 aa).

Residue Asp-96 is the Proton acceptor of the active site. Residues 96-100, Asp-150, Gln-193, and Gly-220 contribute to the substrate site; that span reads DSGGF. The tract at residues 251–257 is RNA binding; it reads GVGAPDS. Asp-270 functions as the Nucleophile in the catalytic mechanism. Residues 275 to 279 form an RNA binding; important for wobble base 34 recognition region; sequence TRIAR. Zn(2+) is bound by residues Cys-308, Cys-310, Cys-313, and His-339.

It belongs to the queuine tRNA-ribosyltransferase family. In terms of assembly, homodimer. Within each dimer, one monomer is responsible for RNA recognition and catalysis, while the other monomer binds to the replacement base PreQ1. It depends on Zn(2+) as a cofactor.

The enzyme catalyses 7-aminomethyl-7-carbaguanine + guanosine(34) in tRNA = 7-aminomethyl-7-carbaguanosine(34) in tRNA + guanine. Its pathway is tRNA modification; tRNA-queuosine biosynthesis. Its function is as follows. Catalyzes the base-exchange of a guanine (G) residue with the queuine precursor 7-aminomethyl-7-deazaguanine (PreQ1) at position 34 (anticodon wobble position) in tRNAs with GU(N) anticodons (tRNA-Asp, -Asn, -His and -Tyr). Catalysis occurs through a double-displacement mechanism. The nucleophile active site attacks the C1' of nucleotide 34 to detach the guanine base from the RNA, forming a covalent enzyme-RNA intermediate. The proton acceptor active site deprotonates the incoming PreQ1, allowing a nucleophilic attack on the C1' of the ribose to form the product. After dissociation, two additional enzymatic reactions on the tRNA convert PreQ1 to queuine (Q), resulting in the hypermodified nucleoside queuosine (7-(((4,5-cis-dihydroxy-2-cyclopenten-1-yl)amino)methyl)-7-deazaguanosine). This chain is Queuine tRNA-ribosyltransferase, found in Streptococcus pyogenes serotype M3 (strain ATCC BAA-595 / MGAS315).